Consider the following 201-residue polypeptide: Desiccation-related protein PCC3-06 (201 aa).

Residues 41–54 (TVASQSQGRQQVSE) show a composition bias toward polar residues. Disordered regions lie at residues 41-155 (TVAS…QNVK) and 177-201 (MGKSEEVKNQAEHETKKRSTSTNYF). 3 stretches are compositionally biased toward basic and acidic residues: residues 57-76 (EDAKKKFSETTDSLKHKTSE), 108-144 (GELKDKTQEGAENVREKAMDAGNDAMEKTRNAGERVA), and 177-193 (MGKSEEVKNQAEHETKK).

Belongs to the LEA type 1 family.

This is Desiccation-related protein PCC3-06 from Craterostigma plantagineum (Blue gem).